We begin with the raw amino-acid sequence, 419 residues long: Appendage-associated protein (419 aa).

Positions 1 to 39 (MIVTYGTVGCPVSRGGSPGCGRRIAEELRLAEDARLRLA) are cleaved as a signal peptide. A coiled-coil region spans residues 232-262 (ERQKAQRRREERAAKAREELRKELNDIDAKW).

The protein localises to the secreted. In terms of biological role, associates with actin filament appendages that are formed in the inclusion appendages of the parasitophorous vacuole during infection of the host erythrocyte. This Anaplasma marginale (strain St. Maries) protein is Appendage-associated protein.